A 101-amino-acid chain; its full sequence is Small ribosomal subunit protein bS16 (101 aa).

It belongs to the bacterial ribosomal protein bS16 family.

The chain is Small ribosomal subunit protein bS16 from Ureaplasma urealyticum serovar 10 (strain ATCC 33699 / Western).